Reading from the N-terminus, the 157-residue chain is Small ribosomal subunit protein uS7 (157 aa).

Belongs to the universal ribosomal protein uS7 family. As to quaternary structure, part of the 30S ribosomal subunit. Contacts proteins S9 and S11.

Functionally, one of the primary rRNA binding proteins, it binds directly to 16S rRNA where it nucleates assembly of the head domain of the 30S subunit. Is located at the subunit interface close to the decoding center, probably blocks exit of the E-site tRNA. This Borrelia hermsii (strain HS1 / DAH) protein is Small ribosomal subunit protein uS7.